Reading from the N-terminus, the 407-residue chain is Methylthioribose kinase (407 aa).

Residues Asn40, Lys57, and 111–113 each bind ATP; that span reads EDL. Asp229 is a binding site for substrate. Residue 246-248 coordinates ATP; sequence DAE. Arg344 is a binding site for substrate.

This sequence belongs to the methylthioribose kinase family. In terms of assembly, homodimer.

It catalyses the reaction 5-(methylsulfanyl)-D-ribose + ATP = 5-(methylsulfanyl)-alpha-D-ribose 1-phosphate + ADP + H(+). Its pathway is amino-acid biosynthesis; L-methionine biosynthesis via salvage pathway; S-methyl-5-thio-alpha-D-ribose 1-phosphate from S-methyl-5'-thioadenosine (hydrolase route): step 2/2. Catalyzes the phosphorylation of methylthioribose into methylthioribose-1-phosphate. This Yersinia pseudotuberculosis serotype O:1b (strain IP 31758) protein is Methylthioribose kinase.